Consider the following 341-residue polypeptide: UDP-3-O-acylglucosamine N-acyltransferase (341 aa).

Catalysis depends on H241, which acts as the Proton acceptor.

The protein belongs to the transferase hexapeptide repeat family. LpxD subfamily. As to quaternary structure, homotrimer.

The catalysed reaction is a UDP-3-O-[(3R)-3-hydroxyacyl]-alpha-D-glucosamine + a (3R)-hydroxyacyl-[ACP] = a UDP-2-N,3-O-bis[(3R)-3-hydroxyacyl]-alpha-D-glucosamine + holo-[ACP] + H(+). It participates in bacterial outer membrane biogenesis; LPS lipid A biosynthesis. In terms of biological role, catalyzes the N-acylation of UDP-3-O-acylglucosamine using 3-hydroxyacyl-ACP as the acyl donor. Is involved in the biosynthesis of lipid A, a phosphorylated glycolipid that anchors the lipopolysaccharide to the outer membrane of the cell. The polypeptide is UDP-3-O-acylglucosamine N-acyltransferase (Haemophilus ducreyi (strain 35000HP / ATCC 700724)).